A 98-amino-acid polypeptide reads, in one-letter code: Sarcosine oxidase subunit delta (98 aa).

Residues cysteine 6, cysteine 9, histidine 59, and cysteine 63 each contribute to the Zn(2+) site.

It belongs to the SoxD family. Heterotetramer composed of subunits alpha (SoxA), beta (SoxB), gamma (SoxG) and delta (SoxD).

It localises to the cytoplasm. It carries out the reaction sarcosine + (6S)-5,6,7,8-tetrahydrofolate + O2 = (6R)-5,10-methylene-5,6,7,8-tetrahydrofolate + glycine + H2O2. It catalyses the reaction sarcosine + O2 + H2O = formaldehyde + glycine + H2O2. Functionally, in the presence of tetrahydrofolate, catalyzes the oxidative demethylation of sarcosine to yield glycine, 5,10-methylenetetrahydrofolate and hydrogen peroxide. In the absence of tetrahydrofolate, catalyzes the oxidative demethylation of sarcosine to yield glycine, formaldehyde and hydrogen peroxide. This chain is Sarcosine oxidase subunit delta, found in Corynebacterium sp. (strain P-1).